The chain runs to 227 residues: Cytochrome c oxidase subunit 2 (227 aa).

Topologically, residues 1-14 (MAYPAQMGFQDATS) are mitochondrial intermembrane. The chain crosses the membrane as a helical span at residues 15-45 (PIMEELLYFHDHTLMIVFMISSLVLYTISLM). At 46 to 59 (LTTSLTHTNTMNAQ) the chain is on the mitochondrial matrix side. The chain crosses the membrane as a helical span at residues 60 to 87 (EVETVWTILPAIICILIALPSLRILYMM). Residues 88-227 (DEINNPSLTI…YFEKWLLTML (140 aa)) are Mitochondrial intermembrane-facing. Cu cation is bound by residues histidine 161, cysteine 196, glutamate 198, cysteine 200, histidine 204, and methionine 207. Glutamate 198 is a binding site for Mg(2+). Tyrosine 218 is modified (phosphotyrosine).

This sequence belongs to the cytochrome c oxidase subunit 2 family. In terms of assembly, component of the cytochrome c oxidase (complex IV, CIV), a multisubunit enzyme composed of 14 subunits. The complex is composed of a catalytic core of 3 subunits MT-CO1, MT-CO2 and MT-CO3, encoded in the mitochondrial DNA, and 11 supernumerary subunits COX4I, COX5A, COX5B, COX6A, COX6B, COX6C, COX7A, COX7B, COX7C, COX8 and NDUFA4, which are encoded in the nuclear genome. The complex exists as a monomer or a dimer and forms supercomplexes (SCs) in the inner mitochondrial membrane with NADH-ubiquinone oxidoreductase (complex I, CI) and ubiquinol-cytochrome c oxidoreductase (cytochrome b-c1 complex, complex III, CIII), resulting in different assemblies (supercomplex SCI(1)III(2)IV(1) and megacomplex MCI(2)III(2)IV(2)). Found in a complex with TMEM177, COA6, COX18, COX20, SCO1 and SCO2. Interacts with TMEM177 in a COX20-dependent manner. Interacts with COX20. Interacts with COX16. It depends on Cu cation as a cofactor.

Its subcellular location is the mitochondrion inner membrane. It catalyses the reaction 4 Fe(II)-[cytochrome c] + O2 + 8 H(+)(in) = 4 Fe(III)-[cytochrome c] + 2 H2O + 4 H(+)(out). Its function is as follows. Component of the cytochrome c oxidase, the last enzyme in the mitochondrial electron transport chain which drives oxidative phosphorylation. The respiratory chain contains 3 multisubunit complexes succinate dehydrogenase (complex II, CII), ubiquinol-cytochrome c oxidoreductase (cytochrome b-c1 complex, complex III, CIII) and cytochrome c oxidase (complex IV, CIV), that cooperate to transfer electrons derived from NADH and succinate to molecular oxygen, creating an electrochemical gradient over the inner membrane that drives transmembrane transport and the ATP synthase. Cytochrome c oxidase is the component of the respiratory chain that catalyzes the reduction of oxygen to water. Electrons originating from reduced cytochrome c in the intermembrane space (IMS) are transferred via the dinuclear copper A center (CU(A)) of subunit 2 and heme A of subunit 1 to the active site in subunit 1, a binuclear center (BNC) formed by heme A3 and copper B (CU(B)). The BNC reduces molecular oxygen to 2 water molecules using 4 electrons from cytochrome c in the IMS and 4 protons from the mitochondrial matrix. The protein is Cytochrome c oxidase subunit 2 (MT-CO2) of Daubentonia madagascariensis (Aye-aye).